The sequence spans 386 residues: Cysteine protease Amb a 11.0101 (386 aa).

The N-terminal stretch at 1–22 (MEINKLVCFSFSLVLILGLVES) is a signal peptide. The T-cell epitope. MHC class II peptide able to activate CD(4+) T cells of the ragweed pollen-allergic patients indicated by significantly increased IL-2 production compared to non-allergic individuals. Not recognized by IgE of the patients allergic to ragweed pollen stretch occupies residues 6-20 (LVCFSFSLVLILGLV). Residues 23 to 108 (FHYHERELES…SKISHFQALR (86 aa)) constitute a propeptide, activation peptide. N-linked (GlcNAc...) (complex) asparagine glycosylation is present at Asn-127. Intrachain disulfides connect Cys-152–Cys-193, Cys-186–Cys-226, and Cys-283–Cys-334. Cys-155 is an active-site residue. Positions 173–186 (GKLVKFSEQQLVDC) are B-cell epitope. Binds to IgE of the patients allergic to ragweed pollen. Residues His-289 and Asn-310 contribute to the active site. The segment at 340 to 377 (SSFPIMNDPNPPKDDPNGPKDDPDAPKDPKFKTTQRLQ) is disordered. The segment covering 350–370 (PPKDDPNGPKDDPDAPKDPKF) has biased composition (basic and acidic residues). A propeptide spans 371 to 386 (KTTQRLQGIRTKLLEL) (removed in mature form).

Belongs to the peptidase C1 family. In terms of assembly, homodimer. Post-translationally, autocatalytic proteolytic cleavage of N-terminal activation peptide. N-glycosylated. Glycosylation is not required for binding to IgE. Expressed in pollen (at protein and mRNA level).

Its activity is regulated as follows. Activated by L-cysteine. Inhibited by cysteine protease inhibitor E64 (L-trans-epoxysuccinyl-leucylamide-(4-guanido)-butane). Inhibited by cysteine/serine protease inhibitor leupeptin. Not inhibited by serine protease inhibitors 4-(2-aminoethyl)benzenesulfonyl fluoride hydrochloride (AEBSF) and phenylmethanesulfonyl fluoride (PMSF), metallo protease inhibitor bestatin or aspartic protease inhibitor pepstatin A. In terms of biological role, cysteine protease. Hydrolyzes casein and synthetic peptide Boc-Val-Leu-Lys-7-amino-4-methylcoumarin (Boc-VLK-AMC) in vitro. In Ambrosia artemisiifolia (Common ragweed), this protein is Cysteine protease Amb a 11.0101.